The primary structure comprises 510 residues: Aromatic-L-amino-acid decarboxylase (510 aa).

The segment covering 1 to 17 (MSHIPISNTIPTKQTDG) has biased composition (polar residues). The interval 1–28 (MSHIPISNTIPTKQTDGNGKANISPDKL) is disordered. Thr-117 serves as a coordination point for substrate. Positions 183, 184, 227, 305, and 334 each coordinate pyridoxal 5'-phosphate. His-227 serves as a coordination point for substrate. His-227 is an active-site residue. Lys-337 carries the post-translational modification N6-(pyridoxal phosphate)lysine. A disordered region spans residues 358 to 384 (NAFNVDPLYLKHDMQGSAPDYRHWQIP).

Belongs to the group II decarboxylase family. In terms of assembly, homodimer. The cofactor is pyridoxal 5'-phosphate. As to expression, hypoderm isoform is expressed only in hypodermal epithelium and the CNS isoform only in central nervous system. Expressed in the adult head (at protein level).

It catalyses the reaction L-dopa + H(+) = dopamine + CO2. The enzyme catalyses 5-hydroxy-L-tryptophan + H(+) = serotonin + CO2. Functionally, catalyzes the decarboxylation of L-3,4-dihydroxyphenylalanine (L-DOPA) to dopamine and L-5-hydroxytryptophan (5-HTP) to serotonin. Catalyzes the formation of serotonin more efficiently than dopamine. Displays no activity to tyrosine. Variation in the synthesis of bioamines may be a factor contributing to natural variation in life span. The chain is Aromatic-L-amino-acid decarboxylase (Ddc) from Drosophila melanogaster (Fruit fly).